The primary structure comprises 251 residues: uncharacterized protein (251 aa).

The N-acetyltransferase domain maps to isoleucine 4–asparagine 152.

The protein belongs to the acetyltransferase family.

This is an uncharacterized protein from Bacillus subtilis (strain 168).